Reading from the N-terminus, the 361-residue chain is Adenosine kinase (361 aa).

The Nuclear localization signal motif lies at 7 to 15 (PKPKKLKVE). Residue Asp-34 participates in adenosine binding. Residue Ser-48 coordinates Mg(2+). Residue Tyr-76 is modified to Phosphotyrosine. Mg(2+) is bound at residue Asn-147. An adenosine-binding site is contributed by Gln-305. Residue Asp-316 is part of the active site. Asp-316 serves as the catalytic Proton acceptor.

This sequence belongs to the carbohydrate kinase PfkB family. As to quaternary structure, monomer. Mg(2+) serves as cofactor.

The protein resides in the nucleus. It catalyses the reaction adenosine + ATP = AMP + ADP + H(+). Its pathway is purine metabolism; AMP biosynthesis via salvage pathway; AMP from adenosine: step 1/1. Catalyzes the phosphorylation of the purine nucleoside adenosine at the 5' position in an ATP-dependent manner. Serves as a potential regulator of concentrations of extracellular adenosine and intracellular adenine nucleotides. This Rattus norvegicus (Rat) protein is Adenosine kinase (Adk).